The primary structure comprises 388 residues: MRSSVLFSLYAATLVAAVAHPKDPQIVLQESQATIVEPDEYLIELSPGETRWVTEDDKWALRRENINFFDITHNKELGTLNHKLSTESVKFPSKPAHNESIVPLLKELKKENMRTHLETFTSFHTRYYKSHYGAESSAWLLEQVRKTLTDAGASKASVKAFPHPWGQASIIATIPGKSDKTVVIGAHQDSINLFLPSILAAPGADDDGSGTVTILEALRVLLKSEEVLKGEADNTIEFHWYSAEEGGLLGSQAIFQSYEKEGRDVKAMLQQDMTGYVQKTLDAGEPESVGVITDFVHPGLTEFIKKIITVYCDIPYVLTKCGYACSDHASASKAGYPSAFVIESDFKYSDNKIHTTEDKIEYLSFDHMLQHARLTLGLVYELAFAKFK.

Residues 1–19 (MRSSVLFSLYAATLVAAVA) form the signal peptide. Residues 20–88 (HPKDPQIVLQ…TLNHKLSTES (69 aa)) constitute a propeptide that is removed on maturation. Asn98 carries an N-linked (GlcNAc...) asparagine glycan. 4 residues coordinate Zn(2+): His187, Asp206, Glu245, and Asp272. Residues Cys321 and Cys325 are joined by a disulfide bond. His354 is a Zn(2+) binding site.

This sequence belongs to the peptidase M28 family. M28E subfamily. As to quaternary structure, monomer. Requires Zn(2+) as cofactor.

It localises to the secreted. Extracellular aminopeptidase that allows assimilation of proteinaceous substrates. In Leptosphaeria maculans (strain JN3 / isolate v23.1.3 / race Av1-4-5-6-7-8) (Blackleg fungus), this protein is Leucine aminopeptidase 1 (LAP1).